The chain runs to 393 residues: Iripin-5 (393 aa).

Residues 1-16 form the signal peptide; sequence MKTLIVLMCSLVVVWA. N-linked (GlcNAc...) asparagine glycosylation is found at Asn198 and Asn245.

It belongs to the serpin family. In terms of tissue distribution, highly expressed in female salivary gland during blood feeding. Expressed in female midgut and ovary during blood feeding.

It localises to the secreted. Serine protease inhibitor that modulates blood feeding of ticks on vertebrate species. Inhibits host neutrophil elastase (ELANE) and proteinase 3/myeloblastin (PRTN3). Moderately inhibits host chymase, cathepsin G (CTSG), trypsin and alpha-chymotrypsin. Decreases host neutrophil migration. Decreases nitric oxide production by host macrophages. Decreases host complement activity. The sequence is that of Iripin-5 from Ixodes ricinus (Common tick).